Reading from the N-terminus, the 310-residue chain is N-acetyl-gamma-glutamyl-phosphate reductase (310 aa).

Residue Cys-117 is part of the active site.

This sequence belongs to the NAGSA dehydrogenase family. Type 2 subfamily.

The protein resides in the cytoplasm. It catalyses the reaction N-acetyl-L-glutamate 5-semialdehyde + phosphate + NADP(+) = N-acetyl-L-glutamyl 5-phosphate + NADPH + H(+). It functions in the pathway amino-acid biosynthesis; L-arginine biosynthesis; N(2)-acetyl-L-ornithine from L-glutamate: step 3/4. Catalyzes the NADPH-dependent reduction of N-acetyl-5-glutamyl phosphate to yield N-acetyl-L-glutamate 5-semialdehyde. The protein is N-acetyl-gamma-glutamyl-phosphate reductase of Brucella ovis (strain ATCC 25840 / 63/290 / NCTC 10512).